We begin with the raw amino-acid sequence, 468 residues long: Glutamate--tRNA ligase 2 (468 aa).

Positions 9 to 19 (PSPTGSLHLGG) match the 'HIGH' region motif. A 'KMSKS' region motif is present at residues 238–242 (KLSKR). K241 is a binding site for ATP.

It belongs to the class-I aminoacyl-tRNA synthetase family. Glutamate--tRNA ligase type 1 subfamily. Monomer.

Its subcellular location is the cytoplasm. The enzyme catalyses tRNA(Glu) + L-glutamate + ATP = L-glutamyl-tRNA(Glu) + AMP + diphosphate. Catalyzes the attachment of glutamate to tRNA(Glu) in a two-step reaction: glutamate is first activated by ATP to form Glu-AMP and then transferred to the acceptor end of tRNA(Glu). This is Glutamate--tRNA ligase 2 from Anaplasma phagocytophilum (strain HZ).